Reading from the N-terminus, the 169-residue chain is Peptide methionine sulfoxide reductase MsrA (169 aa).

Residue C10 is part of the active site.

It belongs to the MsrA Met sulfoxide reductase family.

The catalysed reaction is L-methionyl-[protein] + [thioredoxin]-disulfide + H2O = L-methionyl-(S)-S-oxide-[protein] + [thioredoxin]-dithiol. It carries out the reaction [thioredoxin]-disulfide + L-methionine + H2O = L-methionine (S)-S-oxide + [thioredoxin]-dithiol. Functionally, has an important function as a repair enzyme for proteins that have been inactivated by oxidation. Catalyzes the reversible oxidation-reduction of methionine sulfoxide in proteins to methionine. The polypeptide is Peptide methionine sulfoxide reductase MsrA (Streptococcus pyogenes serotype M28 (strain MGAS6180)).